We begin with the raw amino-acid sequence, 192 residues long: Archaemetzincin (192 aa).

His-137 contributes to the Zn(2+) binding site. Glu-138 functions as the Proton acceptor in the catalytic mechanism. Zn(2+) is bound by residues His-141, His-147, Cys-148, Cys-153, Cys-172, and Cys-175.

It belongs to the peptidase M54 family. In terms of assembly, monomer. Zn(2+) serves as cofactor.

Its function is as follows. Probable zinc metalloprotease whose natural substrate is unknown. This is Archaemetzincin from Pyrococcus furiosus (strain ATCC 43587 / DSM 3638 / JCM 8422 / Vc1).